The primary structure comprises 159 residues: Ribosomal RNA large subunit methyltransferase H (159 aa).

Residues L76, G108, and 127-132 (FGLLTL) contribute to the S-adenosyl-L-methionine site.

It belongs to the RNA methyltransferase RlmH family. Homodimer.

It localises to the cytoplasm. It catalyses the reaction pseudouridine(1915) in 23S rRNA + S-adenosyl-L-methionine = N(3)-methylpseudouridine(1915) in 23S rRNA + S-adenosyl-L-homocysteine + H(+). Functionally, specifically methylates the pseudouridine at position 1915 (m3Psi1915) in 23S rRNA. This chain is Ribosomal RNA large subunit methyltransferase H, found in Streptococcus pyogenes serotype M6 (strain ATCC BAA-946 / MGAS10394).